Consider the following 594-residue polypeptide: Transcriptional repressor p66-beta (594 aa).

S17 bears the Phosphoserine mark. Residues K33 and K66 each participate in a glycyl lysine isopeptide (Lys-Gly) (interchain with G-Cter in SUMO2) cross-link. The interval 62 to 143 (ELPTKQDGSG…ASSPRSSSRM (82 aa)) is disordered. Over residues 74–89 (GYEEKLNGNLRPHGDN) the composition is skewed to basic and acidic residues. Residue K98 forms a Glycyl lysine isopeptide (Lys-Gly) (interchain with G-Cter in SUMO2) linkage. The segment covering 109–119 (SARRSEPDRGR) has biased composition (basic and acidic residues). A Phosphothreonine modification is found at T121. 4 positions are modified to phosphoserine: S123, S130, S135, and S136. Low complexity predominate over residues 130–140 (SDNEASSPRSS). The stretch at 141–195 (SRMEERLKAANLEMFKGKGMEERQQLIKQLRDELRLEEARLVLLKKLRQSQLQKE) forms a coiled coil. K148 participates in a covalent cross-link: Glycyl lysine isopeptide (Lys-Gly) (interchain with G-Cter in SUMO2). Residues 166–191 (LIKQLRDELRLEEARLVLLKKLRQSQ) are CR1; interaction with MBD2 and MBD3. K200 participates in a covalent cross-link: Glycyl lysine isopeptide (Lys-Gly) (interchain with G-Cter in SUMO2). Phosphoserine is present on S209. The segment at 214-237 (SPAHVGQQGLSKLPSRPGAQGIEP) is disordered. A Glycyl lysine isopeptide (Lys-Gly) (interchain with G-Cter in SUMO2) cross-link involves residue K282. Phosphoserine is present on residues S334, S339, and S341. Residues 341-481 (SAMSDAANSQ…QEQEIEQRLQ (141 aa)) form a CR2; histone tail-binding region. Glycyl lysine isopeptide (Lys-Gly) (interchain with G-Cter in SUMO2) cross-links involve residues K354, K455, and K468. A GATA-type zinc finger spans residues 415-468 (RVEPFVCAQCRTDFTPHWKQEKNGKILCEQCMTSNQKKALKAEHTNRLKNAFVK). Residues 450–483 (QKKALKAEHTNRLKNAFVKALQQEQEIEQRLQQQ) are a coiled coil. S487 bears the Phosphoserine mark. K499 participates in a covalent cross-link: Glycyl lysine isopeptide (Lys-Gly) (interchain with G-Cter in SUMO2).

As to quaternary structure, homooligomer. Component of the nucleosome remodeling and deacetylase (NuRD) repressor complex, composed of core proteins MTA1, MTA2, MTA3, RBBP4, RBBP7, HDAC1, HDAC2, MBD2, MBD3, and peripherally associated proteins CDK2AP1, CDK2AP2, GATAD2A, GATAD2B, CHD3, CHD4 and CHD5. The exact stoichiometry of the NuRD complex is unknown, and some subunits such as MBD2 and MBD3, GATAD2A and GATAD2B, and CHD3, CHD4 and CHD5 define mutually exclusive NuRD complexes. Interacts with MBD2; this is required for the enhancement of MBD2-mediated repression and for targeting to the chromatin. Interacts with MBD3. Component of the MeCP1 histone deacetylase complex. Interacts with histone tails, including that of histones H2A, H2B, H3 and H4. Interacts with ERCC6.

The protein localises to the nucleus speckle. It localises to the nucleus. It is found in the chromosome. Transcriptional repressor. Acts as a component of the histone deacetylase NuRD complex which participates in the remodeling of chromatin. Enhances MBD2-mediated repression. Efficient repression requires the presence of GATAD2A. Targets MBD3 to discrete loci in the nucleus. May play a role in synapse development. This chain is Transcriptional repressor p66-beta (Gatad2b), found in Mus musculus (Mouse).